The sequence spans 1008 residues: Pheromone-regulated membrane protein 10 (1008 aa).

3 disordered regions span residues 1–273, 342–384, and 477–506; these read MSQS…TFLG, KLPE…FYTP, and KNDF…TQDE. The segment covering 70–85 has biased composition (low complexity); sequence DTIISNASTTNNSSSD. Polar residues predominate over residues 95–111; the sequence is GENSNLPNFNFSANQVH. 2 stretches are compositionally biased toward acidic residues: residues 116–132 and 143–161; these read ANED…EDTF and GSDE…EDKE. Basic and acidic residues predominate over residues 162–186; the sequence is EVVNEKEEIADDLHSKSSKTSRESK. The segment covering 188-204 has biased composition (polar residues); the sequence is FNAGTKNSRRSLNSLQR. The segment covering 205-214 has biased composition (basic and acidic residues); that stretch reads NETDVTDQLK. Residues 215-225 show a composition bias toward low complexity; that stretch reads RTTSTTSSSKR. Positions 226–239 are enriched in basic and acidic residues; that stretch reads SNSDKRTGFKDILR. Positions 346-364 are enriched in polar residues; the sequence is GTSSDQQLDYSDTSASNLI. The span at 483–498 shows a compositional bias: basic residues; sequence GPKRMANKIPGRKHGA. The next 10 helical transmembrane spans lie at 683–703, 707–727, 736–756, 762–782, 800–820, 838–858, 866–886, 892–912, 917–937, and 978–998; these read SPWL…PFAF, WYDV…QFFV, SVFE…IGSI, FCFS…YIIL, MFYA…GASL, IKQD…LGLI, LPIM…AGKH, VTEF…NLYS, GMAV…GIAS, and VKVS…VYPF.

The protein belongs to the ThrE exporter (TC 2.A.79) family.

The protein resides in the membrane. In Debaryomyces hansenii (strain ATCC 36239 / CBS 767 / BCRC 21394 / JCM 1990 / NBRC 0083 / IGC 2968) (Yeast), this protein is Pheromone-regulated membrane protein 10.